The following is a 61-amino-acid chain: Short neurotoxin 1 (61 aa).

Disulfide bonds link Cys-3–Cys-23, Cys-17–Cys-40, Cys-42–Cys-53, and Cys-54–Cys-59.

The protein belongs to the three-finger toxin family. Short-chain subfamily. Type I alpha-neurotoxin sub-subfamily. Expressed by the venom gland.

The protein localises to the secreted. Binds to muscle nicotinic acetylcholine receptor (nAChR) and inhibit acetylcholine from binding to the receptor, thereby impairing neuromuscular transmission. The chain is Short neurotoxin 1 from Naja philippinensis (Philippine cobra).